Reading from the N-terminus, the 382-residue chain is Small ribosomal subunit protein mS35 (382 aa).

Residues 363-375 (GRGGKALPGGKGG) show a composition bias toward gly residues. Positions 363–382 (GRGGKALPGGKGGKMQRSKR) are disordered.

Belongs to the mitochondrion-specific ribosomal protein mS35 family. As to quaternary structure, component of the mitochondrial small ribosomal subunit (mt-SSU). Mature N.crassa 74S mitochondrial ribosomes consist of a small (37S) and a large (54S) subunit. The 37S small subunit contains a 16S ribosomal RNA (16S mt-rRNA) and 32 different proteins. The 54S large subunit contains a 23S rRNA (23S mt-rRNA) and 42 different proteins.

Its subcellular location is the mitochondrion. Functionally, component of the mitochondrial ribosome (mitoribosome), a dedicated translation machinery responsible for the synthesis of mitochondrial genome-encoded proteins, including at least some of the essential transmembrane subunits of the mitochondrial respiratory chain. The mitoribosomes are attached to the mitochondrial inner membrane and translation products are cotranslationally integrated into the membrane. The chain is Small ribosomal subunit protein mS35 (rsm24) from Neurospora crassa (strain ATCC 24698 / 74-OR23-1A / CBS 708.71 / DSM 1257 / FGSC 987).